The chain runs to 280 residues: Large ribosomal subunit protein uL2 (280 aa).

Disordered stretches follow at residues 29 to 58 (PEKS…GGGH) and 225 to 280 (VMNP…NKKR). The span at 45-58 (SHGHITTRHRGGGH) shows a compositional bias: basic residues. Residues 253–269 (KEGRTRKPKRYSDDMIV) are compositionally biased toward basic and acidic residues. Residues 270 to 280 (RRRRANKNKKR) are compositionally biased toward basic residues.

The protein belongs to the universal ribosomal protein uL2 family. As to quaternary structure, part of the 50S ribosomal subunit. Forms a bridge to the 30S subunit in the 70S ribosome.

One of the primary rRNA binding proteins. Required for association of the 30S and 50S subunits to form the 70S ribosome, for tRNA binding and peptide bond formation. It has been suggested to have peptidyltransferase activity; this is somewhat controversial. Makes several contacts with the 16S rRNA in the 70S ribosome. This is Large ribosomal subunit protein uL2 from Corynebacterium glutamicum (strain R).